We begin with the raw amino-acid sequence, 457 residues long: Protein PIN-LIKES 2 (457 aa).

The Lumenal segment spans residues 1–15; that stretch reads MSGFSSGNVNSRVVD. Residues 16–36 form a helical membrane-spanning segment; the sequence is ILSGVVPLLKLICLTVIGLLL. Residues 37-54 are Cytoplasmic-facing; sequence AHPKTQLVPRATFRLLSK. The helical transmembrane segment at 55–75 threads the bilayer; sequence LVFALFLPCLIFTELGESITL. Over 76-85 the chain is Lumenal; the sequence is DNIVQWWFIP. A helical transmembrane segment spans residues 86 to 106; the sequence is VNVLLSAVVGSLIGYLVVLIC. At 107 to 116 the chain is on the cytoplasmic side; it reads RPPPEFNRFT. Residues 117-137 form a helical membrane-spanning segment; sequence IVMTAFGNTGNLLLAIVSSVC. Residues 138-151 lie on the Lumenal side of the membrane; the sequence is HTKTNPFGPNCNSR. The chain crosses the membrane as a helical span at residues 152–172; the sequence is GVSYVSFAQWVAVILVYTVVY. Over 173 to 291 the chain is Cytoplasmic; sequence HMMEPPLEYY…PVKHILQPPT (119 aa). Residues 292–312 traverse the membrane as a helical segment; sequence IASLLAIIIGSVPQLKSVVFG. Residues 313 to 322 lie on the Lumenal side of the membrane; that stretch reads YDAPLSFITD. The helical transmembrane segment at 323-343 threads the bilayer; the sequence is SLNIMGSAMVPSVMLVLGGML. Residues 344-356 lie on the Cytoplasmic side of the membrane; sequence SEGPNESTLGLRT. A helical membrane pass occupies residues 357-377; the sequence is TIGISVARLLVLPLVGIGIVM. At 378 to 393 the chain is on the lumenal side; sequence SADKLGLISSADPMFK. The chain crosses the membrane as a helical span at residues 394-414; the sequence is FVLLLQYSTPSAILLGAIASL. The Cytoplasmic portion of the chain corresponds to 415–424; sequence RGYAVREASA. The chain crosses the membrane as a helical span at residues 425-445; that stretch reads LLFWQHIFALLSLTFYIVIFF. Over 446-457 the chain is Lumenal; it reads KLTVETTVQGMQ.

The protein belongs to the auxin efflux carrier (TC 2.A.69.2) family. Expressed in seedlings, rosette and cauline leaves, flowers and siliques.

The protein resides in the endoplasmic reticulum membrane. In terms of biological role, involved in cellular auxin homeostasis by regulating auxin metabolism. Regulates intracellular auxin accumulation at the endoplasmic reticulum and thus auxin availability for nuclear auxin signaling. The polypeptide is Protein PIN-LIKES 2 (Arabidopsis thaliana (Mouse-ear cress)).